A 107-amino-acid polypeptide reads, in one-letter code: MTQVFQGRSFLAEKDFTRAELEYLIDFSAHLKDLKKRGVPHHYLEGKNIALLFEKTSTRTRAAFTTAAIDLGAHPEYLGANDIQLGKKESTEDTAKVLGRMFDGIEF.

Residues 57-61 (STRTR) and Gln-84 each bind carbamoyl phosphate.

Belongs to the aspartate/ornithine carbamoyltransferase superfamily. OTCase family.

It localises to the cytoplasm. It catalyses the reaction carbamoyl phosphate + L-ornithine = L-citrulline + phosphate + H(+). The protein operates within amino-acid degradation; L-arginine degradation via ADI pathway; carbamoyl phosphate from L-arginine: step 2/2. The sequence is that of Ornithine carbamoyltransferase, catabolic (arcB) from Streptococcus pyogenes.